The following is a 591-amino-acid chain: CTP synthase 1-A (591 aa).

A Glutamine amidotransferase type-1 domain is found at Ser300–Tyr554. Catalysis depends on for GATase activity residues Cys399, His526, and Glu528.

Belongs to the CTP synthase family.

The catalysed reaction is UTP + L-glutamine + ATP + H2O = CTP + L-glutamate + ADP + phosphate + 2 H(+). It functions in the pathway pyrimidine metabolism; CTP biosynthesis via de novo pathway; CTP from UDP: step 2/2. This enzyme is involved in the de novo synthesis of CTP, a precursor of DNA, RNA and phospholipids. Catalyzes the ATP-dependent amination of UTP to CTP with either L-glutamine or ammonia as a source of nitrogen. This Xenopus laevis (African clawed frog) protein is CTP synthase 1-A (ctps1-a).